Consider the following 279-residue polypeptide: Four and a half LIM domains protein 2 (279 aa).

The C4-type zinc-finger motif lies at 7-31; the sequence is CHHCNESLFGKKYILREESPYCVVC. LIM zinc-binding domains follow at residues 40-92, 101-153, and 162-212; these read CEEC…CTDC, CQEC…CVPC, and CVQC…CLNC. A Glycyl lysine isopeptide (Lys-Gly) (interchain with G-Cter in SUMO2) cross-link involves residue lysine 78. Residues lysine 167 and lysine 220 each participate in a glycyl lysine isopeptide (Lys-Gly) (interchain with G-Cter in SUMO2) cross-link. Positions 221–275 constitute an LIM zinc-binding 4 domain; that stretch reads CAGCTNPISGLGGTKYISFEERQWHNDCFNCKKCSLSLVGRGFLTERDDILCPDC. Serine 238 carries the phosphoserine modification.

As to quaternary structure, interacts with ZNF638 and TTN/titin. Interacts with E4F1. Interacts with GRB7. Interacts with SIRT1 and FOXO1. Interacts with CEFIP. Interacts with calcineurin. Interacts with FOXK1. As to expression, expressed in skeletal muscle and heart.

The protein resides in the cytoplasm. It is found in the nucleus. Its subcellular location is the myofibril. It localises to the sarcomere. The protein localises to the z line. Its function is as follows. May function as a molecular transmitter linking various signaling pathways to transcriptional regulation. Negatively regulates the transcriptional repressor E4F1 and may function in cell growth. Inhibits the transcriptional activity of FOXO1 and its apoptotic function by enhancing the interaction of FOXO1 with SIRT1 and FOXO1 deacetylation. Negatively regulates the calcineurin/NFAT signaling pathway in cardiomyocytes. The chain is Four and a half LIM domains protein 2 (FHL2) from Homo sapiens (Human).